Consider the following 257-residue polypeptide: Cytosolic Fe-S cluster assembly factor NUBP2 homolog (257 aa).

14-21 (GKGGVGKS) contacts ATP. Residues Cys188 and Cys191 each contribute to the [4Fe-4S] cluster site.

The protein belongs to the Mrp/NBP35 ATP-binding proteins family. NUBP2/CFD1 subfamily. As to quaternary structure, heterotetramer of 2 NUBP1 and 2 NUBP2 chains. Requires [4Fe-4S] cluster as cofactor.

It localises to the cytoplasm. In terms of biological role, component of the cytosolic iron-sulfur (Fe/S) protein assembly (CIA) machinery. Required for maturation of extramitochondrial Fe-S proteins. The NUBP1-NUBP2 heterotetramer forms a Fe-S scaffold complex, mediating the de novo assembly of an Fe-S cluster and its transfer to target apoproteins. The chain is Cytosolic Fe-S cluster assembly factor NUBP2 homolog from Culex quinquefasciatus (Southern house mosquito).